The sequence spans 500 residues: Aldehyde dehydrogenase (500 aa).

Residue 246–251 (GSTLVG) coordinates NAD(+). The active-site Proton acceptor is the E269. C303 acts as the Nucleophile in catalysis.

The protein belongs to the aldehyde dehydrogenase family.

It carries out the reaction an aldehyde + NAD(+) + H2O = a carboxylate + NADH + 2 H(+). The protein operates within alcohol metabolism; ethanol degradation; acetate from ethanol: step 2/2. The polypeptide is Aldehyde dehydrogenase (aldA) (Agaricus bisporus (White button mushroom)).